Reading from the N-terminus, the 243-residue chain is 2-C-methyl-D-erythritol 4-phosphate cytidylyltransferase (243 aa).

It belongs to the IspD/TarI cytidylyltransferase family. IspD subfamily.

The catalysed reaction is 2-C-methyl-D-erythritol 4-phosphate + CTP + H(+) = 4-CDP-2-C-methyl-D-erythritol + diphosphate. It functions in the pathway isoprenoid biosynthesis; isopentenyl diphosphate biosynthesis via DXP pathway; isopentenyl diphosphate from 1-deoxy-D-xylulose 5-phosphate: step 2/6. Functionally, catalyzes the formation of 4-diphosphocytidyl-2-C-methyl-D-erythritol from CTP and 2-C-methyl-D-erythritol 4-phosphate (MEP). The chain is 2-C-methyl-D-erythritol 4-phosphate cytidylyltransferase from Pelodictyon phaeoclathratiforme (strain DSM 5477 / BU-1).